A 163-amino-acid chain; its full sequence is IQ domain-containing protein F2 (163 aa).

2 IQ domains span residues 42-71 (RVIA…STWI) and 98-127 (RERA…AIYV).

The chain is IQ domain-containing protein F2 (IQCF2) from Bos taurus (Bovine).